A 123-amino-acid chain; its full sequence is Small ribosomal subunit protein uS12 (123 aa).

Asp89 carries the 3-methylthioaspartic acid modification.

Belongs to the universal ribosomal protein uS12 family. As to quaternary structure, part of the 30S ribosomal subunit. Contacts proteins S8 and S17. May interact with IF1 in the 30S initiation complex.

With S4 and S5 plays an important role in translational accuracy. Its function is as follows. Interacts with and stabilizes bases of the 16S rRNA that are involved in tRNA selection in the A site and with the mRNA backbone. Located at the interface of the 30S and 50S subunits, it traverses the body of the 30S subunit contacting proteins on the other side and probably holding the rRNA structure together. The combined cluster of proteins S8, S12 and S17 appears to hold together the shoulder and platform of the 30S subunit. The chain is Small ribosomal subunit protein uS12 from Rhodopseudomonas palustris (strain BisB18).